The chain runs to 81 residues: Photosystem I iron-sulfur center (81 aa).

4Fe-4S ferredoxin-type domains lie at 2 to 31 (SHAV…MVPW) and 39 to 68 (IASS…IRVY). Cys11, Cys14, Cys17, Cys21, Cys48, Cys51, Cys54, and Cys58 together coordinate [4Fe-4S] cluster.

As to quaternary structure, the cyanobacterial PSI reaction center is composed of one copy each of PsaA,B,C,D,E,F,I,J,K,L,M and X, and forms trimeric complexes. [4Fe-4S] cluster serves as cofactor.

It is found in the cellular thylakoid membrane. It carries out the reaction reduced [plastocyanin] + hnu + oxidized [2Fe-2S]-[ferredoxin] = oxidized [plastocyanin] + reduced [2Fe-2S]-[ferredoxin]. Apoprotein for the two 4Fe-4S centers FA and FB of photosystem I (PSI); essential for photochemical activity. FB is the terminal electron acceptor of PSI, donating electrons to ferredoxin. The C-terminus interacts with PsaA/B/D and helps assemble the protein into the PSI complex. Required for binding of PsaD and PsaE to PSI. PSI is a plastocyanin/cytochrome c6-ferredoxin oxidoreductase, converting photonic excitation into a charge separation, which transfers an electron from the donor P700 chlorophyll pair to the spectroscopically characterized acceptors A0, A1, FX, FA and FB in turn. In Prochlorococcus marinus (strain NATL2A), this protein is Photosystem I iron-sulfur center.